We begin with the raw amino-acid sequence, 335 residues long: Protein BRASSINAZOLE-RESISTANT 2 (335 aa).

Over residues 1–19 the composition is skewed to low complexity; that stretch reads MTSDGATSTSAAAAAAAMA. Disordered stretches follow at residues 1-40, 85-122, and 164-190; these read MTSD…RRRR, TYRK…FDSP, and PPLR…KPLP. Residues 22–103 form a required for DNA-binding region; sequence RKPSWREREN…PGDMAGSSSR (82 aa). Residues 99-120 are compositionally biased toward polar residues; it reads GSSSRATPYSSHNQSPLSSTFD. Threonine 175 carries the phosphothreonine modification. The tract at residues 231-251 is PEST-like; it reads HAPATIPECDESDSSTVDSGH.

The protein belongs to the BZR/LAT61 family. In terms of assembly, interacts with ASK7/BIN2 through its C-terminal domain and with the bHLH transcription factors BIM1, BIM2 and BIM3 through its C- and N-terminal domains. Interacts (via N-terminus) with REF6 and ELF6. Interacts with MYB30. Interacts with IWS1. Interacts with ASHH2/SDG8. Binds to MYB56 when dephosphorylated in the nucleus of quiescent center (QC) cells. Binds to WRKY46, WRKY54 and WRKY70 to cooperatively regulate the expression of target genes. Post-translationally, phosphorylated by ASK7/BIN2. Phosphorylation increases protein degradation and/or interferes with the nuclear localization. In terms of tissue distribution, ubiquitously expressed in cotyledons, leaves, hypocotyls and roots.

Its subcellular location is the nucleus. It localises to the cytoplasm. Functionally, positive regulator of brassinosteroid (BR) signaling. Transcription factor that activates target gene expression by binding specifically to the DNA sequence 5'-CANNTG-3'(E box) through its N-terminal domain. Can bind individually to the promoter as a homodimer or synergistically as a heterodimer with BIM1, BIM2 or BIM3. The C-terminal domain is probably involved in transcriptional activation. Recruits the transcription elongation factor IWS1 to control BR-regulated gene expression. Forms a trimeric complex with IWS1 and ASHH2/SDG8 to regulate BR-regulated gene expression. Promotes quiescent center (QC) self-renewal by cell divisions in the primary root. Binds to the E-boxes of the BRAVO promoter to repress its expression. This Arabidopsis thaliana (Mouse-ear cress) protein is Protein BRASSINAZOLE-RESISTANT 2.